The following is a 64-amino-acid chain: Conotoxin Am1.1 (64 aa).

The signal sequence occupies residues 1–22 (MSCLPVFVILLLLTASGPSVDA). Residues 23–49 (RLKTKDDVPLSSFRDNAKSTLRRLQDK) constitute a propeptide that is removed on maturation. 4-hydroxyproline; partial; in major form is present on Pro-60.

This sequence belongs to the conotoxin T superfamily. Post-translationally, contains 2 disulfide bonds. As to expression, expressed by the venom duct.

It localises to the secreted. In terms of biological role, probable toxin that inhibits ion channels. The polypeptide is Conotoxin Am1.1 (Conus amadis (Amadis cone)).